The primary structure comprises 60 residues: Metallothionein A (60 aa).

Residues 1–28 are beta; that stretch reads MDPCECSKSGNCNCGGSCTCTNCSCKSC. Residues Cys4, Cys6, Cys12, Cys14, Cys18, Cys20, Cys23, Cys25, Cys28, Cys32, Cys33, Cys35, Cys36, Cys40, Cys43, Cys47, Cys49, Cys54, Cys58, and Cys59 each coordinate a divalent metal cation. The interval 29–60 is alpha; that stretch reads KKSCCPCCPSGCTKCASGCVCKGKTCDTSCCQ.

Belongs to the metallothionein superfamily. Type 1 family.

Its function is as follows. Metallothioneins have a high content of cysteine residues that bind various heavy metals. The chain is Metallothionein A (mta) from Parachaenichthys charcoti (Charcot's dragonfish).